The primary structure comprises 93 residues: SH3 domain-binding glutamic acid-rich-like protein 3 (93 aa).

Serine 2 bears the N-acetylserine mark. The region spanning 2-93 is the Glutaredoxin domain; that stretch reads SGLRVYSTSV…NTLQEFLKLA (92 aa). The O-linked (GalNAc...) threonine glycan is linked to threonine 9.

It belongs to the SH3BGR family. In terms of assembly, interacts with MYO1C (via its IQ motifs); the interaction is dependent on calcium and takes place at membrane ruffles. Post-translationally, may be glycosylated. In terms of tissue distribution, expressed in heart, liver, lung, kidney, spleen, thymus, ovarian follicles, skeletal muscle, brain, lymph node and mammary epithelial and stromal cells (at protein level).

It is found in the cytoplasm. The protein resides in the cytosol. Its subcellular location is the cell projection. It localises to the ruffle membrane. The protein localises to the nucleus. Could act as a modulator of glutaredoxin biological activity. May play a role in cytoskeleton organization. This Rattus norvegicus (Rat) protein is SH3 domain-binding glutamic acid-rich-like protein 3.